Here is a 341-residue protein sequence, read N- to C-terminus: MEDLEIFLKRFEDLLIDLATYNENESNDYIIYRKKLLSYDYLKDFIPDFIIKNRKPQFFRAYMQEIGGYKERRDLIYKGFERLYDYETIKNFDSDNSYNVNQIENFLERFEDLLIDLATENLKKDGFEEYSLFRKKFLTCNYFKDMPIFLKRNPKHFRYYMQSQGGYKERRKIISEEFNKLFSIIEGSNFNSDSNNKNKSINKKEYDIFVSHSSEDKEDFVKEFVNLLKQKGLSVWYDDDIVKIGHNLRKRISKGIKSSNYAVVIFSEDFFKSKWTNYEYDNIFLDFYDEEKVLPILHDLTIEDLEKFDGSIPLIRALSTKKFTVEEIIHEILERINEEKS.

A TIR domain is found at 204–336 (KEYDIFVSHS…EIIHEILERI (133 aa)). Residues 213-214 (SS) and K243 each bind NAD(+). Residue E279 is part of the active site.

The catalysed reaction is NAD(+) + H2O = ADP-D-ribose + nicotinamide + H(+). It catalyses the reaction NAD(+) = 2'cADPR + nicotinamide + H(+). Its function is as follows. NAD(+) hydrolase (NADase) that catalyzes cleavage of NAD(+) into ADP-D-ribose (ADPR) and nicotinamide. In addition to ADPR, also generates a cyclization variant of cyclic ADPR (cADPR), termed v-cADPR (probably 2'cADPR). This is Probable 2' cyclic ADP-D-ribose synthase TcpO from Methanobrevibacter olleyae.